A 185-amino-acid polypeptide reads, in one-letter code: MLDEIYKNQKAFSDKALEVLKRDFTTLRTGKVNINIVDHINVDYYGSPTALNQVATVLATDASTISISPWEKTMLKAISSAIQAANIGVNPNNDGDSVKLFFPPMTTEDRQKNAKEARSMGEKAKVAIRNIRKDANDDIKKIEKDKSVSEDEIKKGYDEVQKITDSYISKIDQLVKDKEAELLKV.

The protein belongs to the RRF family.

It localises to the cytoplasm. Functionally, responsible for the release of ribosomes from messenger RNA at the termination of protein biosynthesis. May increase the efficiency of translation by recycling ribosomes from one round of translation to another. This is Ribosome-recycling factor from Campylobacter fetus subsp. fetus (strain 82-40).